The following is a 187-amino-acid chain: Protein GrpE (187 aa).

Residues 1-38 (MSEEKQTVEQNETEEQEIIEEQAAADEQQEETNESELL) are disordered. Over residues 11–34 (NETEEQEIIEEQAAADEQQEETNE) the composition is skewed to acidic residues.

The protein belongs to the GrpE family. As to quaternary structure, homodimer.

It is found in the cytoplasm. In terms of biological role, participates actively in the response to hyperosmotic and heat shock by preventing the aggregation of stress-denatured proteins, in association with DnaK and GrpE. It is the nucleotide exchange factor for DnaK and may function as a thermosensor. Unfolded proteins bind initially to DnaJ; upon interaction with the DnaJ-bound protein, DnaK hydrolyzes its bound ATP, resulting in the formation of a stable complex. GrpE releases ADP from DnaK; ATP binding to DnaK triggers the release of the substrate protein, thus completing the reaction cycle. Several rounds of ATP-dependent interactions between DnaJ, DnaK and GrpE are required for fully efficient folding. The chain is Protein GrpE from Bacillus subtilis (strain 168).